Consider the following 774-residue polypeptide: MSEAARDLSPGAPPAVAAAAPEERKGKEPEREKLPPIVTAGAAAGLDRGSKGQISTFSSFVSTVTQKKEAAENRSSPTHLALPNIRNVRDLPPICLDVRQKQRMSVEALPSEVKVPPLPEPSLPSQPKTVKDFEEDLEKAEATGNWKTVHAFYITAFDSFTELNTAFKKDATASFNTIEDSGLNANLVNAVFDALLNTPQDIQKSVLKGIINSLLQEWKGPRTKDDLRAYFILLQNPQFNITSTYVIYAHLLRQIATLVEADHHFLVHWLKKLSQKKFKQLVERLLQFVSLRLFPAKPEEFPPLTKCTWWIPSAAKVLALLNTANNLVHPPLVPYTDFYNSTLDHIDLMEEYHTWQSFGNSHRFSFCQYPFVISIAAKKIIIQRDSEQQMISIARQSLVDKVSRRQRPDMNMLFLNMKVRRTHLVSDSLDELTRKRADLKKKLKVTFVGEAGLDMGGLTKEWFLLLIRQIFHPDYGMFTYHKDSHCHWFSSFKCDNYSEFRLVGILMGLAVYNSITLDIRFPPCCYKKLLSPPVVPSDQSTPVGICSVTIDDLCQVMPELAHGLKELLSYEGNVEEDFYSTFQVFQEEFGVIKSYNLKPGGDKIPVTNQNRREYVQLYTDFLLNKSIYKQFAAFYCGFHSVCASNALMLLRPEEVEILVCGSPELDMHALQRSTQYDGYAKTDLTIRYFWDVVLGFPLELQKKLLHFTTGSDRVPVGGMADLNFKISKNETSTNWLPVAHTCFNQLCLPPYKSKKDLKQKLIIGISNSEGFGLE.

Positions 1–51 are disordered; that stretch reads MSEAARDLSPGAPPAVAAAAPEERKGKEPEREKLPPIVTAGAAAGLDRGSK. Ser9 bears the Phosphoserine mark. Basic and acidic residues predominate over residues 21–34; that stretch reads PEERKGKEPEREKL. In terms of domain architecture, HECT spans 435–774; the sequence is KRADLKKKLK…ISNSEGFGLE (340 aa). Cys742 serves as the catalytic Glycyl thioester intermediate.

The catalysed reaction is S-ubiquitinyl-[E2 ubiquitin-conjugating enzyme]-L-cysteine + [acceptor protein]-L-lysine = [E2 ubiquitin-conjugating enzyme]-L-cysteine + N(6)-ubiquitinyl-[acceptor protein]-L-lysine.. The protein operates within protein modification; protein ubiquitination. E3 ubiquitin-protein ligase which accepts ubiquitin from an E2 ubiquitin-conjugating enzyme in the form of a thioester and then directly transfers the ubiquitin to targeted substrates. The chain is Probable E3 ubiquitin-protein ligase HECTD2 (Hectd2) from Mus musculus (Mouse).